We begin with the raw amino-acid sequence, 576 residues long: Arginine--tRNA ligase (576 aa).

The short motif at Ala-126 to His-136 is the 'HIGH' region element.

The protein belongs to the class-I aminoacyl-tRNA synthetase family. As to quaternary structure, monomer.

It localises to the cytoplasm. The catalysed reaction is tRNA(Arg) + L-arginine + ATP = L-arginyl-tRNA(Arg) + AMP + diphosphate. This chain is Arginine--tRNA ligase (argS), found in Rickettsia prowazekii (strain Madrid E).